Here is a 146-residue protein sequence, read N- to C-terminus: UPF0735 ACT domain-containing protein Cbei_1295 (146 aa).

The region spanning 70 to 145 (TYNIIFKNEK…NVEKVEFIGM (76 aa)) is the ACT domain.

It belongs to the UPF0735 family.

In Clostridium beijerinckii (strain ATCC 51743 / NCIMB 8052) (Clostridium acetobutylicum), this protein is UPF0735 ACT domain-containing protein Cbei_1295.